Here is an 80-residue protein sequence, read N- to C-terminus: Defensin-like protein CAL1 (80 aa).

Positions 1–31 (MAPSRRMVASAFLLLAILVATEMGTTKVAEA) are cleaved as a signal peptide. 4 disulfides stabilise this stretch: Cys-34–Cys-80, Cys-45–Cys-65, Cys-51–Cys-74, and Cys-55–Cys-76.

It belongs to the DEFL family. In terms of tissue distribution, expressed preferentially in root exodermis and xylem parenchyma cells in vasculature of root and flag leaf sheath.

Its subcellular location is the secreted. The protein resides in the extracellular space. Plant defensin-like protein involved in accumulation of cadmium (Cd) in rice leaves. Mediates Cd efflux from cytosol into extracellular spaces via chelation. This drives Cd secretion from xylem parenchyma cells into the xylem vessels, hence lowering Cd levels in cytosol meanwhile promoting Cd translocation from roots to shoots. The protein is Defensin-like protein CAL1 of Oryza sativa subsp. japonica (Rice).